The primary structure comprises 320 residues: NADH-ubiquinone oxidoreductase chain 1 (320 aa).

The next 8 membrane-spanning stretches (helical) occupy residues 3–23 (LITIINPLTYIVPILIAVAFL), 72–92 (ILLILSPVLALTMAMLIWTPI), 103–123 (LGFLSILAISSMAVNSILWAG), 147–167 (VTLGIILLSILILTGGFTMQL), 174–194 (HIWLLATSWPLMMMWFISTLA), 226–246 (FFLAEYANIISMNLLTCILFI), 255–275 (ELFLINLITKTMILTLTFLWI), and 295–315 (FLPLTMALCLLHVSLLISISG).

It belongs to the complex I subunit 1 family.

It localises to the mitochondrion inner membrane. It catalyses the reaction a ubiquinone + NADH + 5 H(+)(in) = a ubiquinol + NAD(+) + 4 H(+)(out). In terms of biological role, core subunit of the mitochondrial membrane respiratory chain NADH dehydrogenase (Complex I) that is believed to belong to the minimal assembly required for catalysis. Complex I functions in the transfer of electrons from NADH to the respiratory chain. The immediate electron acceptor for the enzyme is believed to be ubiquinone. This chain is NADH-ubiquinone oxidoreductase chain 1 (MT-ND1), found in Varanus jobiensis (Peach throat monitor).